The sequence spans 221 residues: MSDGDYDYLIKFLALGDSGVGKTSVLYQYTDGKFNSKFITTVGIDFREKRVVYRANGPDGAIGRGQRIHLQLWDTAGQERFRSLTTAFFRDAMGFLLLFDLTNEQSFLNVRNWISQLQMHAYCENPDIVLCGNKSDLEDQRVVKEEDARGLAEKYGIPYFETSAANGTNISQAIEMLLDLIMKRMERCVDKSWIPEGVVRSNGHTSTDHLNEAKEKGICGC.

The residue at position 2 (Ser2) is an N-acetylserine. A Phosphoserine modification is found at Ser2. Residue 16–24 (GDSGVGKTS) coordinates GTP. The short motif at 38 to 46 (FITTVGIDF) is the Effector region element. GTP is bound by residues 74–78 (DTAGQ), 133–136 (NKSD), and 163–165 (SAA). Cys123 and Cys188 are disulfide-bonded. S-geranylgeranyl cysteine attachment occurs at residues Cys219 and Cys221. At Cys221 the chain carries Cysteine methyl ester.

It belongs to the small GTPase superfamily. Rab family. In terms of assembly, binds SYTL1, SLAC2B, MYRIP, SYTL3, SYTL4 and SYTL5. Interacts with RPH3A and RPH3A. Binds MLPH and SYTL2. Interacts with UNC13D. Does not interact with the BLOC-3 complex (heterodimer of HPS1 and HPS4). Interacts (GDP-bound form preferentially) with DENND10.

The protein resides in the membrane. The protein localises to the melanosome. Its subcellular location is the late endosome. It localises to the lysosome. The catalysed reaction is GTP + H2O = GDP + phosphate + H(+). Regulated by guanine nucleotide exchange factors (GEFs) which promote the exchange of bound GDP for free GTP, GTPase activating proteins (GAPs) which increase the GTP hydrolysis activity, and GDP dissociation inhibitors which inhibit the dissociation of the nucleotide from the GTPase. Activated by GEFs such as DENND10. Small GTPase which cycles between active GTP-bound and inactive GDP-bound states. In its active state, binds to a variety of effector proteins to regulate homeostasis of late endocytic pathway, including endosomal positioning, maturation and secretion. Plays a role in cytotoxic granule exocytosis in lymphocytes. Required for both granule maturation and granule docking and priming at the immunologic synapse. The protein is Ras-related protein Rab-27A (RAB27A) of Canis lupus familiaris (Dog).